The chain runs to 784 residues: Lon protease (784 aa).

A Lon N-terminal domain is found at 11 to 204; sequence IPVLPLRDVV…YLMAMMESEI (194 aa). 356-363 is a binding site for ATP; that stretch reads GPPGVGKT. The region spanning 592 to 773 is the Lon proteolytic domain; it reads ENRVGQVTGL…EEVLALALQN (182 aa). Active-site residues include Ser679 and Lys722.

This sequence belongs to the peptidase S16 family. Homohexamer. Organized in a ring with a central cavity.

It localises to the cytoplasm. The catalysed reaction is Hydrolysis of proteins in presence of ATP.. ATP-dependent serine protease that mediates the selective degradation of mutant and abnormal proteins as well as certain short-lived regulatory proteins. Required for cellular homeostasis and for survival from DNA damage and developmental changes induced by stress. Degrades polypeptides processively to yield small peptide fragments that are 5 to 10 amino acids long. Binds to DNA in a double-stranded, site-specific manner. The protein is Lon protease of Erwinia amylovora (Fire blight bacteria).